The primary structure comprises 276 residues: MAD2L1-binding protein (276 aa).

Residues 1–10 are compositionally biased toward acidic residues; the sequence is MAASGEEDMS. The tract at residues 1–30 is disordered; that stretch reads MAASGEEDMSELSPAAAPNLDWYEKPEETH. The interaction with MAD2L1 stretch occupies residues 49-81; it reads PAEPFCPRDLVPVVFPGPVSQEDCCQFTCELLK.

The protein belongs to the MAD2L1BP family. In terms of assembly, interacts with MAD2L1.

It localises to the nucleus. It is found in the nucleoplasm. The protein resides in the cytoplasm. Its subcellular location is the cytoskeleton. The protein localises to the spindle. May function to silence the spindle checkpoint and allow mitosis to proceed through anaphase by binding MAD2L1 after it has become dissociated from the MAD2L1-CDC20 complex. The polypeptide is MAD2L1-binding protein (Mad2l1bp) (Mus musculus (Mouse)).